A 237-amino-acid chain; its full sequence is MADS-box protein GGM13 (237 aa).

One can recognise an MADS-box domain in the interval 1-61 (MGRGKIEIKR…GKLFEYSSAS (61 aa)). A K-box domain is found at 84–174 (NQHLYCEMTR…CRLLAEQQAA (91 aa)).

As to expression, expression specific for female reproductive structures: strong at the adaxial base of the cupules, where ovules will later develop, then in the outermost cell layer of the nucellus, in the inner envelope, and in the inner half of the middle envelope at late stage of ovule development.

It is found in the nucleus. Its function is as follows. Probable transcription factor. This Gnetum gnemon (Spanish joint-fir) protein is MADS-box protein GGM13 (GGM13).